The chain runs to 149 residues: 3-dehydroquinate dehydratase (149 aa).

The active-site Proton acceptor is Tyr-26. The substrate site is built by Asn-78, His-84, and Asp-91. The active-site Proton donor is the His-104. Residues 105–106 (LS) and Arg-115 contribute to the substrate site.

It belongs to the type-II 3-dehydroquinase family. As to quaternary structure, homododecamer.

It carries out the reaction 3-dehydroquinate = 3-dehydroshikimate + H2O. Its pathway is metabolic intermediate biosynthesis; chorismate biosynthesis; chorismate from D-erythrose 4-phosphate and phosphoenolpyruvate: step 3/7. Catalyzes a trans-dehydration via an enolate intermediate. This Polynucleobacter asymbioticus (strain DSM 18221 / CIP 109841 / QLW-P1DMWA-1) (Polynucleobacter necessarius subsp. asymbioticus) protein is 3-dehydroquinate dehydratase.